The chain runs to 227 residues: Cytochrome c oxidase subunit 2 (227 aa).

Topologically, residues 1 to 14 (MAYPFQLGLQDATS) are mitochondrial intermembrane. A helical transmembrane segment spans residues 15-45 (PIMEELANFHDHTLMIVFLISSLVLYIISSM). Residues 46–59 (LTTKLTHTSTMDAQ) are Mitochondrial matrix-facing. Residues 60–87 (EVETIWTILPAVILILIALPSLRILYMM) form a helical membrane-spanning segment. Residues 88-227 (DEINNPALTV…HFENWSASMI (140 aa)) lie on the Mitochondrial intermembrane side of the membrane. Cu cation-binding residues include histidine 161, cysteine 196, glutamate 198, cysteine 200, histidine 204, and methionine 207. Glutamate 198 contacts Mg(2+).

It belongs to the cytochrome c oxidase subunit 2 family. As to quaternary structure, component of the cytochrome c oxidase (complex IV, CIV), a multisubunit enzyme composed of 14 subunits. The complex is composed of a catalytic core of 3 subunits MT-CO1, MT-CO2 and MT-CO3, encoded in the mitochondrial DNA, and 11 supernumerary subunits COX4I, COX5A, COX5B, COX6A, COX6B, COX6C, COX7A, COX7B, COX7C, COX8 and NDUFA4, which are encoded in the nuclear genome. The complex exists as a monomer or a dimer and forms supercomplexes (SCs) in the inner mitochondrial membrane with NADH-ubiquinone oxidoreductase (complex I, CI) and ubiquinol-cytochrome c oxidoreductase (cytochrome b-c1 complex, complex III, CIII), resulting in different assemblies (supercomplex SCI(1)III(2)IV(1) and megacomplex MCI(2)III(2)IV(2)). Found in a complex with TMEM177, COA6, COX18, COX20, SCO1 and SCO2. Interacts with TMEM177 in a COX20-dependent manner. Interacts with COX20. Interacts with COX16. It depends on Cu cation as a cofactor.

It is found in the mitochondrion inner membrane. The catalysed reaction is 4 Fe(II)-[cytochrome c] + O2 + 8 H(+)(in) = 4 Fe(III)-[cytochrome c] + 2 H2O + 4 H(+)(out). Functionally, component of the cytochrome c oxidase, the last enzyme in the mitochondrial electron transport chain which drives oxidative phosphorylation. The respiratory chain contains 3 multisubunit complexes succinate dehydrogenase (complex II, CII), ubiquinol-cytochrome c oxidoreductase (cytochrome b-c1 complex, complex III, CIII) and cytochrome c oxidase (complex IV, CIV), that cooperate to transfer electrons derived from NADH and succinate to molecular oxygen, creating an electrochemical gradient over the inner membrane that drives transmembrane transport and the ATP synthase. Cytochrome c oxidase is the component of the respiratory chain that catalyzes the reduction of oxygen to water. Electrons originating from reduced cytochrome c in the intermembrane space (IMS) are transferred via the dinuclear copper A center (CU(A)) of subunit 2 and heme A of subunit 1 to the active site in subunit 1, a binuclear center (BNC) formed by heme A3 and copper B (CU(B)). The BNC reduces molecular oxygen to 2 water molecules using 4 electrons from cytochrome c in the IMS and 4 protons from the mitochondrial matrix. This is Cytochrome c oxidase subunit 2 (MT-CO2) from Malacomys longipes (Big-eared swamp rat).